The following is a 352-amino-acid chain: Nicotinate-nucleotide--dimethylbenzimidazole phosphoribosyltransferase (352 aa).

E318 (proton acceptor) is an active-site residue.

The protein belongs to the CobT family.

It catalyses the reaction 5,6-dimethylbenzimidazole + nicotinate beta-D-ribonucleotide = alpha-ribazole 5'-phosphate + nicotinate + H(+). It participates in nucleoside biosynthesis; alpha-ribazole biosynthesis; alpha-ribazole from 5,6-dimethylbenzimidazole: step 1/2. Catalyzes the synthesis of alpha-ribazole-5'-phosphate from nicotinate mononucleotide (NAMN) and 5,6-dimethylbenzimidazole (DMB). This is Nicotinate-nucleotide--dimethylbenzimidazole phosphoribosyltransferase from Dehalococcoides mccartyi (strain CBDB1).